The following is a 179-amino-acid chain: ATP-dependent protease subunit HslV (179 aa).

Residue Thr-6 is part of the active site. Na(+) is bound by residues Ser-164, Cys-167, and Thr-170.

It belongs to the peptidase T1B family. HslV subfamily. In terms of assembly, a double ring-shaped homohexamer of HslV is capped on each side by a ring-shaped HslU homohexamer. The assembly of the HslU/HslV complex is dependent on binding of ATP.

The protein resides in the cytoplasm. It catalyses the reaction ATP-dependent cleavage of peptide bonds with broad specificity.. Allosterically activated by HslU binding. Protease subunit of a proteasome-like degradation complex believed to be a general protein degrading machinery. The chain is ATP-dependent protease subunit HslV from Listeria monocytogenes serotype 4b (strain CLIP80459).